A 657-amino-acid polypeptide reads, in one-letter code: WD repeat-containing protein 70 (657 aa).

Disordered regions lie at residues 1-21 (MEHSGTSEVTGADTAGPDPQL) and 43-172 (FEQT…PVQR). Basic and acidic residues predominate over residues 45-78 (QTRRTAVERSRKTLEAREKEEEMNREKELRKQIE). Residues 82-105 (PAPSSSSAARERSQSSCRDTSSSD) are compositionally biased toward low complexity. 2 stretches are compositionally biased toward acidic residues: residues 106-119 (SESDDSSDSSDDEL) and 150-168 (EEGEDDDDDELDDEGEEDN). WD repeat units lie at residues 183–222 (HGTKTVSALGLDPSGARLVTGGYDYDVKFWDFAGMDASFK), 230–271 (CECH…ECIK), 284–324 (GHTA…KQKS), 333–372 (GKKVIPTTCTYSRDGNLVAAACQNGSIQIWDRNLTVHPKF), 379–418 (DPGTDTSCVAFSYDGNVLASRGGDDTLKLWDVRQFNKPLF), 424–469 (PTLF…RVYE), and 472–511 (ITDASVVRCLWHPKLNQIMVGTGNGLAKVYYDPNKSQRGA). Lys-299 participates in a covalent cross-link: Glycyl lysine isopeptide (Lys-Gly) (interchain with G-Cter in SUMO2). Residue Lys-455 is modified to N6-acetyllysine. A compositionally biased stretch (basic and acidic residues) spans 543 to 568 (REPRQRSTRKQLEKDRLDPLKSHKPE). The disordered stretch occupies residues 543–584 (REPRQRSTRKQLEKDRLDPLKSHKPEPPVAGPGRGGRVGTHG). The span at 574 to 584 (PGRGGRVGTHG) shows a compositional bias: gly residues. Thr-582 bears the Phosphothreonine mark. Residues Lys-593 and Lys-599 each participate in a glycyl lysine isopeptide (Lys-Gly) (interchain with G-Cter in SUMO2) cross-link. A phosphoserine mark is found at Ser-624 and Ser-641. The interval 634–657 (TMFAQVESDDEESKNEPEWKKRKI) is disordered. The span at 647-657 (KNEPEWKKRKI) shows a compositional bias: basic and acidic residues.

It belongs to the WD repeat GAD-1 family.

The protein is WD repeat-containing protein 70 (Wdr70) of Mus musculus (Mouse).